The primary structure comprises 118 residues: D-dopachrome decarboxylase-B (118 aa).

Proline 2 carries the post-translational modification N-acetylproline.

It belongs to the MIF family. As to quaternary structure, homotrimer.

It localises to the cytoplasm. The catalysed reaction is D-dopachrome + H(+) = 5,6-dihydroxyindole + CO2. Tautomerization of D-dopachrome with decarboxylation to give 5,6-dihydroxyindole (DHI). This chain is D-dopachrome decarboxylase-B (ddt-b), found in Xenopus laevis (African clawed frog).